A 775-amino-acid polypeptide reads, in one-letter code: Phenylalanine--tRNA ligase beta subunit (775 aa).

The tRNA-binding domain occupies 39-147 (GIDLDGVVFG…EDFKPGTDAN (109 aa)). In terms of domain architecture, B5 spans 394-470 (YKPKKVFLPQ…RVKGYEHYTS (77 aa)). D448, D454, E457, and E458 together coordinate Mg(2+). An FDX-ACB domain is found at 681-774 (AKFPPVVRDI…LKEKYGVELR (94 aa)).

The protein belongs to the phenylalanyl-tRNA synthetase beta subunit family. Type 1 subfamily. Tetramer of two alpha and two beta subunits. Mg(2+) is required as a cofactor.

Its subcellular location is the cytoplasm. It catalyses the reaction tRNA(Phe) + L-phenylalanine + ATP = L-phenylalanyl-tRNA(Phe) + AMP + diphosphate + H(+). This is Phenylalanine--tRNA ligase beta subunit (pheT) from Aquifex aeolicus (strain VF5).